Consider the following 100-residue polypeptide: uncharacterized protein (100 aa).

The chain crosses the membrane as a helical span at residues 13–32 (IWSSLNIICLMVTFLNVQLS).

It localises to the mitochondrion membrane. This is an uncharacterized protein from Schizosaccharomyces pombe (strain 972 / ATCC 24843) (Fission yeast).